Reading from the N-terminus, the 581-residue chain is Leucine-rich repeat transmembrane neuronal protein 3 (581 aa).

The N-terminal stretch at 1-30 (MGFNVIRLLSGSAVALVIAPTVLLTMLSSA) is a signal peptide. In terms of domain architecture, LRRNT spans 31–61 (ERGCPKGCRCEGKMVYCESQKLQEIPSSISA). Topologically, residues 31–419 (ERGCPKGCRC…ADAEHISFHK (389 aa)) are extracellular. LRR repeat units lie at residues 63 to 83 (CLGLSLRYNSLQKLKYNQFKG), 86 to 107 (QLTWLYLDHNHISNIDENAFNG), 110 to 131 (RLKELILSSNRISYFLNNTFRP), 134 to 155 (NLRNLDLSYNQLHSLGSEQFRG), 158 to 179 (KLLSLHLRSNSLRTIPVRIFQD), 182 to 203 (NLELLDLGYNRIRSLARNVFAG), 206 to 226 (RLKELHLEHNQFSKLNLALFP), 230 to 251 (SLQNLYLQWNKISVIGQTMSWT), 254 to 275 (SLQRLDLSGNEIEAFSGPSVFQ), and 279 to 300 (NLQRLNLDSNKLTFIGQEILDS). A glycan (N-linked (GlcNAc...) asparagine) is linked at Asn-126. The region spanning 312-363 (NIWECSRNICSLVNWLKSFKGLRENTIICASPKELQGVNVIDAVKNYSICGK) is the LRRCT domain. An N-linked (GlcNAc...) asparagine glycan is attached at Asn-357. The segment at 377–408 (KPTFKPKLPRPKHESKPPLPPTVGATEPGPET) is disordered. A helical transmembrane segment spans residues 420–440 (IIAGSVALFLSVLVILLVIYV). At 441–581 (SWKRYPASMK…RISDHKQQLA (141 aa)) the chain is on the cytoplasmic side.

It belongs to the LRRTM family. Expressed in neuronal tissues.

Its subcellular location is the cell membrane. The protein localises to the postsynaptic cell membrane. Functionally, exhibits a limited synaptogenic activity in vitro, restricted to excitatory presynaptic differentiation. May play a role in the development and maintenance of the vertebrate nervous system. The chain is Leucine-rich repeat transmembrane neuronal protein 3 (LRRTM3) from Homo sapiens (Human).